We begin with the raw amino-acid sequence, 88 residues long: Probable Fe(2+)-trafficking protein (88 aa).

This sequence belongs to the Fe(2+)-trafficking protein family.

In terms of biological role, could be a mediator in iron transactions between iron acquisition and iron-requiring processes, such as synthesis and/or repair of Fe-S clusters in biosynthetic enzymes. This Teredinibacter turnerae (strain ATCC 39867 / T7901) protein is Probable Fe(2+)-trafficking protein.